Consider the following 479-residue polypeptide: D-hydantoinase/dihydropyrimidinase (479 aa).

Residues His59, His61, and Lys150 each contribute to the Zn(2+) site. An N6-carboxylysine modification is found at Lys150. Tyr155 provides a ligand contact to substrate. His183 and His239 together coordinate Zn(2+). Ser289 contributes to the substrate binding site. Asp316 provides a ligand contact to Zn(2+). Asn337 contacts substrate.

Belongs to the metallo-dependent hydrolases superfamily. Hydantoinase/dihydropyrimidinase family. As to quaternary structure, homotetramer. The cofactor is Zn(2+). In terms of processing, carboxylation allows a single lysine to coordinate two zinc ions.

It carries out the reaction 5,6-dihydrouracil + H2O = 3-(carbamoylamino)propanoate + H(+). Catalyzes the hydrolysis of dihydropyrimidines and of the structurally related DL-5-mono-substituted hydantoins, to produce N-carbamoyl-D-amino acids. This is D-hydantoinase/dihydropyrimidinase (dht) from Pseudomonas aeruginosa (strain ATCC 15692 / DSM 22644 / CIP 104116 / JCM 14847 / LMG 12228 / 1C / PRS 101 / PAO1).